The following is a 323-amino-acid chain: tRNA U34 carboxymethyltransferase (323 aa).

Residues lysine 91, tryptophan 105, lysine 110, glycine 130, 152-154 (DPT), 181-182 (IE), methionine 196, tyrosine 200, and arginine 315 contribute to the carboxy-S-adenosyl-L-methionine site.

It belongs to the class I-like SAM-binding methyltransferase superfamily. CmoB family. Homotetramer.

The catalysed reaction is carboxy-S-adenosyl-L-methionine + 5-hydroxyuridine(34) in tRNA = 5-carboxymethoxyuridine(34) in tRNA + S-adenosyl-L-homocysteine + H(+). Functionally, catalyzes carboxymethyl transfer from carboxy-S-adenosyl-L-methionine (Cx-SAM) to 5-hydroxyuridine (ho5U) to form 5-carboxymethoxyuridine (cmo5U) at position 34 in tRNAs. This Escherichia fergusonii (strain ATCC 35469 / DSM 13698 / CCUG 18766 / IAM 14443 / JCM 21226 / LMG 7866 / NBRC 102419 / NCTC 12128 / CDC 0568-73) protein is tRNA U34 carboxymethyltransferase.